A 387-amino-acid polypeptide reads, in one-letter code: Probable purine permease 6 (387 aa).

Residues 1–24 (MMELESETQELHLHVNGEPEGKFS) form a disordered region. The span at 9–24 (QELHLHVNGEPEGKFS) shows a compositional bias: basic and acidic residues. The next 10 helical transmembrane spans lie at 36–56 (LRVS…TLLG), 68–88 (WLET…YYYL), 106–126 (FLTL…HCIL), 129–149 (FGLL…QLAF), 162–182 (ITPF…LLVI), 201–221 (YVIG…VLSL), 238–258 (ILDM…VGLF), 283–303 (INIG…GLII), 309–329 (FSNV…VVFF), and 333–353 (MSGI…SYGY). Residues 362-387 (PEEDQELPQSKEEEEQKQVDTIHVQA) are disordered. Positions 370-381 (QSKEEEEQKQVD) are enriched in basic and acidic residues.

The protein belongs to the purine permeases (TC 2.A.7.14) family.

The protein localises to the membrane. The sequence is that of Probable purine permease 6 (PUP6) from Arabidopsis thaliana (Mouse-ear cress).